A 651-amino-acid chain; its full sequence is Threonine--tRNA ligase (651 aa).

The TGS domain occupies 1–61 (MIKITFPDNS…NDDATVKLLK (61 aa)). A catalytic region spans residues 242-541 (DHRKIGKEMD…LIEHTAGKFP (300 aa)). Cys-337, His-388, and His-518 together coordinate Zn(2+).

It belongs to the class-II aminoacyl-tRNA synthetase family. Homodimer. Requires Zn(2+) as cofactor.

It is found in the cytoplasm. The enzyme catalyses tRNA(Thr) + L-threonine + ATP = L-threonyl-tRNA(Thr) + AMP + diphosphate + H(+). In terms of biological role, catalyzes the attachment of threonine to tRNA(Thr) in a two-step reaction: L-threonine is first activated by ATP to form Thr-AMP and then transferred to the acceptor end of tRNA(Thr). Also edits incorrectly charged L-seryl-tRNA(Thr). This is Threonine--tRNA ligase from Parabacteroides distasonis (strain ATCC 8503 / DSM 20701 / CIP 104284 / JCM 5825 / NCTC 11152).